The sequence spans 313 residues: Protein sprouty homolog 1 (313 aa).

Met-1 carries the N-acetylmethionine modification. The tract at residues 43 to 152 is disordered; that stretch reads QIKAIRGSNE…RSDRVIRTQP (110 aa). Residues 69-79 show a composition bias toward basic and acidic residues; that stretch reads PRPEKQERTHE. Residues 106–125 show a composition bias toward low complexity; the sequence is SRSTSTGSAASSGSSSSVSS. Positions 177 to 289 constitute an SPR domain; sequence QCGKCKCGEC…CYDWTHRPGC (113 aa).

The protein belongs to the sprouty family. In terms of assembly, forms heterodimers with SPRY2. Interacts with TESK1. Interacts with CAV1 (via C-terminus).

The protein resides in the cytoplasm. The protein localises to the membrane. Functionally, inhibits fibroblast growth factor (FGF)-induced retinal lens fiber differentiation, probably by inhibiting FGF-mediated phosphorylation of ERK1/2. Inhibits TGFB-induced epithelial-to-mesenchymal transition in lens epithelial cells. In Mus musculus (Mouse), this protein is Protein sprouty homolog 1 (Spry1).